A 587-amino-acid chain; its full sequence is Pescadillo homolog (587 aa).

Residues 267 to 306 adopt a coiled-coil conformation; that stretch reads LKKKEEKNDEEGKNLSKKELNKAIKADQEQQENDEQDNNN. The segment at 290 to 311 is disordered; it reads IKADQEQQENDEQDNNNGESVE. The segment covering 295 to 311 has biased composition (acidic residues); that stretch reads EQQENDEQDNNNGESVE. One can recognise a BRCT domain in the interval 335–434; it reads STAELFSKFI…ELINVNEYAA (100 aa). Residues 437-587 form a disordered region; that stretch reads TLPPHLSPWG…KKKEQLKKLN (151 aa). A compositionally biased stretch (acidic residues) spans 459–494; the sequence is KEDGEAEEDTDEEEEEVEIEDGDEDQEDEEEEEDED. A coiled-coil region spans residues 470–587; the sequence is EEEEEVEIED…KKKEQLKKLN (118 aa). Composition is skewed to basic and acidic residues over residues 529–541, 559–569, and 578–587; these read SNKE…ELKK, IEKKENREKQL, and KKKEQLKKLN.

This sequence belongs to the pescadillo family. In terms of assembly, component of the NOP7 complex, composed of ERB1, NOP7 and YTM1. The complex is held together by ERB1, which interacts with NOP7 via its N-terminal domain and with YTM1 via a high-affinity interaction between the seven-bladed beta-propeller domains of the 2 proteins. The NOP7 complex associates with the 66S pre-ribosome.

Its subcellular location is the nucleus. It localises to the nucleolus. The protein localises to the nucleoplasm. Component of the NOP7 complex, which is required for maturation of the 25S and 5.8S ribosomal RNAs and formation of the 60S ribosome. Required for the transition from hyphal to yeast growth. The chain is Pescadillo homolog from Candida albicans (strain SC5314 / ATCC MYA-2876) (Yeast).